Reading from the N-terminus, the 931-residue chain is Myelin regulatory factor homolog 1 (931 aa).

Residues 1-658 (MSSSDLLKGE…SCGSRLSQGT (658 aa)) are Cytoplasmic-facing. The segment at 29 to 143 (TDEDDGSMVS…QQHQQTRGGN (115 aa)) is disordered. Residues 37 to 52 (VSPTSSADSMHQNLGV) are compositionally biased toward polar residues. Over residues 53–68 (QQQQQQMLQAQQRQNQ) the composition is skewed to low complexity. Over residues 117–126 (DNGNQTMNNI) the composition is skewed to polar residues. Residues 127-138 (QSQQLSQQQHQQ) show a composition bias toward low complexity. Positions 169 to 436 (GTAAVNQPTN…TNPGSFEPQD (268 aa)) form a DNA-binding region, NDT80. Positions 483-582 (SDIRLKEAIT…RMTGDLDSKI (100 aa)) constitute a Peptidase S74 domain. The chain crosses the membrane as a helical span at residues 659-679 (VVTLVSIMAACLLAMSALYVL). Topologically, residues 680-931 (DWHNRNYGYH…FYRMCTLSSS (252 aa)) are lumenal. N-linked (GlcNAc...) asparagine glycans are attached at residues Asn-797 and Asn-912.

This sequence belongs to the MRF family. Homotrimer. Interacts with myrf-2. Interacts (via C-terminus) with pan-1 (via LRR regions); the interaction promotes the role of myrf-1 in the synaptic remodeling of DD GABAergic motor neurons at the cell membrane. Myelin regulatory factor: Follows autocatalytic cleavage via the peptidase S74 domain. Autoprocessing is apparently constitutive and is essential for transcriptional activity. In terms of tissue distribution, widely expressed in many tissues, including neuronal, muscle and epidermal stem cells. In neurons, expressed in dorsal D (DD) GABAergic motor neurons.

It is found in the endoplasmic reticulum membrane. It localises to the nucleus. Its subcellular location is the apical cell membrane. The protein resides in the cytoplasm. Its function is as follows. Constitutes a precursor of the transcription factor. Mediates the autocatalytic cleavage that releases the Myelin regulatory factor homolog 1, N-terminal component that specifically activates transcription of genes involved in synaptic rewiring during nervous system maturation. Functionally, membrane-bound part that has no transcription factor activity and remains attached to the endoplasmic reticulum membrane following cleavage. Transcription factor that specifically activates expression of genes involved in synaptic rewiring during nervous system maturation. Specifically required for dorsal D (DD) GABAergic motor neurons synaptic rewiring. Acts in complex with myrf-2 paralog. The chain is Myelin regulatory factor homolog 1 from Caenorhabditis elegans.